We begin with the raw amino-acid sequence, 302 residues long: Acetylglutamate kinase (302 aa).

Residues 67–68 (GG), Arg89, and Asn189 contribute to the substrate site.

Belongs to the acetylglutamate kinase family. ArgB subfamily.

The protein localises to the cytoplasm. The enzyme catalyses N-acetyl-L-glutamate + ATP = N-acetyl-L-glutamyl 5-phosphate + ADP. It participates in amino-acid biosynthesis; L-arginine biosynthesis; N(2)-acetyl-L-ornithine from L-glutamate: step 2/4. Its function is as follows. Catalyzes the ATP-dependent phosphorylation of N-acetyl-L-glutamate. The protein is Acetylglutamate kinase of Streptomyces clavuligerus.